Consider the following 359-residue polypeptide: Histidinol-phosphate aminotransferase (359 aa).

N6-(pyridoxal phosphate)lysine is present on Lys-217.

It belongs to the class-II pyridoxal-phosphate-dependent aminotransferase family. Histidinol-phosphate aminotransferase subfamily. Homodimer. The cofactor is pyridoxal 5'-phosphate.

The catalysed reaction is L-histidinol phosphate + 2-oxoglutarate = 3-(imidazol-4-yl)-2-oxopropyl phosphate + L-glutamate. Its pathway is amino-acid biosynthesis; L-histidine biosynthesis; L-histidine from 5-phospho-alpha-D-ribose 1-diphosphate: step 7/9. The protein is Histidinol-phosphate aminotransferase of Salmonella enteritidis PT4 (strain P125109).